A 653-amino-acid polypeptide reads, in one-letter code: Leucine-rich repeat-containing protein 4 (653 aa).

The signal sequence occupies residues 1–38 (MKLLWQVTVHHHTWNAILLPFVYLTAQVWILCAAIAAA). Positions 39–75 (ASAGPQNCPSVCSCSNQFSKVVCTRRGLSEVPQGIPS) constitute an LRRNT domain. Over 39 to 527 (ASAGPQNCPS…SLDEVMKTTK (489 aa)) the chain is Extracellular. Disulfide bonds link C46–C52 and C50–C61. 9 LRR repeats span residues 76-97 (NTRY…TFRH), 100-121 (HLEV…AFNG), 124-145 (SLNT…AFEY), 148-169 (KLRE…AFNR), 172-194 (SLMR…AFEG), 197-218 (NLKY…TPLV), 219-240 (GLEE…SFHG), 243-264 (SLKK…AFDG), and 267-288 (SLVE…LFTP). N277, N322, N363, N388, N410, N434, N440, N447, and N450 each carry an N-linked (GlcNAc...) asparagine glycan. One can recognise an LRRCT domain in the interval 300–352 (NPWNCDCDILWLAWWLREYIPTNSTCCGRCHAPMHMRGRYLVEVDQASFQCSA). 2 disulfide bridges follow: C304-C329 and C306-C350. The region spanning 353-442 (PFIMDAPRDL…SNASAYLNVS (90 aa)) is the Ig-like domain. A disulfide bridge links C374 with C424. A helical membrane pass occupies residues 528-548 (IIIGCFVAVTLLAAAMLIVFY). Over 549–653 (KLRKRHQQRS…TKDKVQETQI (105 aa)) the chain is Cytoplasmic.

As to quaternary structure, interacts with DLG4. Interacts (via LRR repeats) with NTNG2. Forms a complex with DLG4 and with NMDA receptors. In terms of processing, N-glycosylated. In terms of tissue distribution, specifically expressed in brain.

It is found in the membrane. Its subcellular location is the postsynaptic cell membrane. Synaptic adhesion protein. Regulates the formation of exitatory synapses through the recruitment of pre-and-postsynaptic proteins. Organize the lamina/pathway-specific differentiation of dendrites. Plays an important role for auditory synaptic responses. Involved in the suppression of glioma. The protein is Leucine-rich repeat-containing protein 4 (LRRC4) of Homo sapiens (Human).